Here is a 660-residue protein sequence, read N- to C-terminus: Epithelial sodium channel subunit gamma (660 aa).

Residues 1-55 (MSKSGKKLTQKLKKNLPVTGPQAPTLYELMQWYCLNTNTHGCRRIVVSKGRLRRW) lie on the Cytoplasmic side of the membrane. Residues 56-76 (IWISLTLCAVAVIFWQCALLL) traverse the membrane as a helical segment. Topologically, residues 77–537 (MSYYSVSASI…VTLLSNFGGQ (461 aa)) are extracellular. 8 cysteine pairs are disulfide-bonded: cysteine 101-cysteine 286, cysteine 209-cysteine 217, cysteine 263-cysteine 270, cysteine 375-cysteine 460, cysteine 397-cysteine 456, cysteine 401-cysteine 452, cysteine 410-cysteine 437, and cysteine 412-cysteine 426. A helical membrane pass occupies residues 538-558 (LGLWMSCSMICVLEIIEVFFI). Over 559–660 (DSFWVVLRQR…IDSDEDVERL (102 aa)) the chain is Cytoplasmic.

The protein belongs to the amiloride-sensitive sodium channel (TC 1.A.6) family. SCNN1G subfamily. In terms of assembly, component of the heterotrimeric epithelial sodium channel (ENaC) composed of an alpha/SCNN1A, a beta/SCNN1B and a gamma/SCNN1G subunit.

It is found in the apical cell membrane. The catalysed reaction is Na(+)(in) = Na(+)(out). Originally identified and characterized by its inhibition by the diuretic drug amiloride. This is one of the three pore-forming subunits of the heterotrimeric epithelial sodium channel (ENaC), a critical regulator of sodium balance and fluid homeostasis. ENaC operates in epithelial tissues, where it mediates the electrodiffusion of sodium ions from extracellular fluid through the apical membrane of cells, with water following osmotically. The polypeptide is Epithelial sodium channel subunit gamma (scnn1g-a) (Xenopus laevis (African clawed frog)).